A 566-amino-acid chain; its full sequence is Transcription factor P14E8.02 (566 aa).

A disordered region spans residues 1–32; that stretch reads MNISSQNVLLPSPIPSSSPMASHKKSWLSKHP. Position 73 is a phosphoserine (Ser-73). Residues 86–137 enclose the FHA domain; the sequence is NKIGRSSQQCDHVLSTVDKAISRVHAIVTCTQDRMIIECVGWNGMIVSDKMR. Disordered regions lie at residues 191-217, 269-291, 312-334, and 364-437; these read EENREPMSPSPQEALPLMPSSPPSQDY, DCSKNTQLKPSFLPKNTDDLLNG, ESDDLDKNEEISEGEEYTPIEES, and FTNH…TKEN. A compositionally biased stretch (acidic residues) spans 314–330; the sequence is DDLDKNEEISEGEEYTP. Composition is skewed to polar residues over residues 373–383 and 414–428; these read NSNITTSNDSP and DENTNDSNESLPSSH. A phosphoserine mark is found at Ser-379 and Ser-382.

The protein belongs to the PLM2/TOS4 family.

Its subcellular location is the nucleus. Probable transcriptional regulatory protein Required for G1/S progression. The sequence is that of Transcription factor P14E8.02 from Schizosaccharomyces pombe (strain 972 / ATCC 24843) (Fission yeast).